A 367-amino-acid polypeptide reads, in one-letter code: MAYRVLGRAGPPQPRRARRLLFAFTLSLSCTYLCYSFLCCCDDLGRSRLLGAPRCLRGPSAGGQKLLQKSRPCDPSGPTPSEPSAPSAPAAAVPAPRLSGSNHSGSPKLGTKRLPQALIVGVKKGGTRAVLEFIRVHPDVRALGTEPHFFDRNYGRGLDWYRSLMPRTLESQITLEKTPSYFVTQEAPRRIFNMSRDTKLIVVVRNPVTRAISDYTQTLSKKPDIPTFEGLSFRNRTLGLVDVSWNAIRIGMYVLHLESWLQYFPLAQIHFVSGERLITDPAGEMGRVQDFLGIKRFITDKHFYFNKTKGFPCLKKTESSLLPRCLGKSKGRTHVQIDPEVIDQLREFYRPYNIKFYETVGQDFRWE.

Residues 1–19 (MAYRVLGRAGPPQPRRARR) are Cytoplasmic-facing. A helical; Signal-anchor for type II membrane protein transmembrane segment spans residues 20 to 39 (LLFAFTLSLSCTYLCYSFLC). Topologically, residues 40–367 (CCDDLGRSRL…ETVGQDFRWE (328 aa)) are lumenal. The segment at 61–110 (AGGQKLLQKSRPCDPSGPTPSEPSAPSAPAAAVPAPRLSGSNHSGSPKLG) is disordered. Over residues 84-96 (SAPSAPAAAVPAP) the composition is skewed to low complexity. A glycan (N-linked (GlcNAc...) asparagine) is linked at Asn102. 124–128 (KGGTR) contributes to the 3'-phosphoadenylyl sulfate binding site. Residues 146–152 (EPHFFDR) and 177–180 (KTPS) contribute to the substrate site. Asn193 carries N-linked (GlcNAc...) asparagine glycosylation. Arg205 and Ser213 together coordinate 3'-phosphoadenylyl sulfate. Asn235 is a glycosylation site (N-linked (GlcNAc...) asparagine). 245–246 (WN) contacts substrate. N-linked (GlcNAc...) asparagine glycosylation occurs at Asn306. Cys313 and Cys325 form a disulfide bridge. Residue 330-334 (KGRTH) coordinates 3'-phosphoadenylyl sulfate.

The protein belongs to the sulfotransferase 1 family. Highly expressed in the brain and weakly expressed in the heart, placenta, lung and skeletal muscle.

It localises to the golgi apparatus membrane. It catalyses the reaction alpha-D-glucosaminyl-[heparan sulfate](n) + 3'-phosphoadenylyl sulfate = 3-sulfo-alpha-D-glucosaminyl-[heparan sulfate](n) + adenosine 3',5'-bisphosphate + H(+). Sulfotransferase that utilizes 3'-phospho-5'-adenylyl sulfate (PAPS) to catalyze the transfer of a sulfo group to an N-unsubstituted glucosamine linked to a 2-O-sulfo iduronic acid unit on heparan sulfate. Catalyzes the O-sulfation of glucosamine in GlcA2S-GlcNS. Unlike HS3ST1/3-OST-1, does not convert non-anticoagulant heparan sulfate to anticoagulant heparan sulfate. The protein is Heparan sulfate glucosamine 3-O-sulfotransferase 2 (HS3ST2) of Homo sapiens (Human).